The primary structure comprises 293 residues: ATP synthase gamma chain (293 aa).

The protein belongs to the ATPase gamma chain family. As to quaternary structure, F-type ATPases have 2 components, CF(1) - the catalytic core - and CF(0) - the membrane proton channel. CF(1) has five subunits: alpha(3), beta(3), gamma(1), delta(1), epsilon(1). CF(0) has three main subunits: a, b and c.

It is found in the cell membrane. Its function is as follows. Produces ATP from ADP in the presence of a proton gradient across the membrane. The gamma chain is believed to be important in regulating ATPase activity and the flow of protons through the CF(0) complex. This Streptococcus agalactiae serotype Ia (strain ATCC 27591 / A909 / CDC SS700) protein is ATP synthase gamma chain.